A 340-amino-acid polypeptide reads, in one-letter code: Glycerol-3-phosphate dehydrogenase [NAD(P)+] (340 aa).

3 residues coordinate NADPH: serine 13, tryptophan 14, and lysine 108. Lysine 108, glycine 139, and serine 141 together coordinate sn-glycerol 3-phosphate. Alanine 143 contributes to the NADPH binding site. Residues lysine 194, aspartate 247, serine 257, arginine 258, and asparagine 259 each contribute to the sn-glycerol 3-phosphate site. Residue lysine 194 is the Proton acceptor of the active site. NADPH is bound at residue arginine 258. Positions 282 and 284 each coordinate NADPH.

The protein belongs to the NAD-dependent glycerol-3-phosphate dehydrogenase family.

It localises to the cytoplasm. The catalysed reaction is sn-glycerol 3-phosphate + NAD(+) = dihydroxyacetone phosphate + NADH + H(+). It carries out the reaction sn-glycerol 3-phosphate + NADP(+) = dihydroxyacetone phosphate + NADPH + H(+). The protein operates within membrane lipid metabolism; glycerophospholipid metabolism. Its function is as follows. Catalyzes the reduction of the glycolytic intermediate dihydroxyacetone phosphate (DHAP) to sn-glycerol 3-phosphate (G3P), the key precursor for phospholipid synthesis. This is Glycerol-3-phosphate dehydrogenase [NAD(P)+] from Streptococcus sanguinis (strain SK36).